The following is a 245-amino-acid chain: Probable transcriptional regulatory protein APH_0480 (245 aa).

It belongs to the TACO1 family.

Its subcellular location is the cytoplasm. This Anaplasma phagocytophilum (strain HZ) protein is Probable transcriptional regulatory protein APH_0480.